A 551-amino-acid chain; its full sequence is MRARQQLLASLQAIVKDMGLSWPEKATLEPPRDKSFGDLAANIALVISKDAGVPPRELASRLAGALRDSDPAIASVDIAGPGFLNVTYSPDFWRETVLHVEAAGDRYGATAVGAGRKAQVEYVSANPTGPLHIGHGRGAALGDCLARVLRFAGYDVTTEYYINDAGRQMRLLGLSVWLRALELSGRPFTLPEDFYRGDYIKDIAAEMLAKDPGLVDLPEAEGQDRCFEYAMNSIMDGIKQDLADFRVEHQVWFSELSLVREGAVEKTFERLKAAGLAFEQDGALWFRTTTLGDDKDRVLRKSDGTLTYFASDIAYHDNKYDRGFDLVVDIWGADHHGYVPRMRAAVAALGKRPEQFDVILVQLVNLLQNGEQIAMSTRAGQFETLHDVVREVGADAARFMFLSRKSDSHLDFDLELVKQRSMDNPVYYVQYAHARVCAVLRKAAERAIVLPARLDAAALAPLTLPEELDLLRLVDRMPDTLSAAAEGLAPHHVSFYLMEVAGALHSYYAKVPVLNAADAETIVARLALLRAVGQAVANGLNLLGVEAPEAM.

A 'HIGH' region motif is present at residues A125 to H135.

This sequence belongs to the class-I aminoacyl-tRNA synthetase family. As to quaternary structure, monomer.

It is found in the cytoplasm. The catalysed reaction is tRNA(Arg) + L-arginine + ATP = L-arginyl-tRNA(Arg) + AMP + diphosphate. In Nitratidesulfovibrio vulgaris (strain DSM 19637 / Miyazaki F) (Desulfovibrio vulgaris), this protein is Arginine--tRNA ligase.